Consider the following 403-residue polypeptide: Lipase lipl-5 (403 aa).

An N-terminal signal peptide occupies residues 1-18; sequence MWRFAVFLAAFFVQDVVG. Asn-64 carries N-linked (GlcNAc...) asparagine glycosylation. Ser-167 serves as the catalytic Nucleophile. Asn-271 carries N-linked (GlcNAc...) asparagine glycosylation. Active-site charge relay system residues include Asp-343 and His-375.

This sequence belongs to the AB hydrolase superfamily. Lipase family.

The protein localises to the lysosome lumen. Its subcellular location is the secreted. Its function is as follows. Lipase involved in lipid homeostasis. Regulates mitochondrial lipid composition, in particular cardiolipins and coenzyme Q-9 levels, in response to nutrient availability. Does not affect global triglyceride levels in response to nutrient availability. However, in coelomocytes, specifically promotes triglyceride catabolism and lifespan extension in response to nutrient deprivation. The chain is Lipase lipl-5 from Caenorhabditis elegans.